Here is a 693-residue protein sequence, read N- to C-terminus: Serine/threonine-protein kinase Pkn1 (693 aa).

Positions 59 to 328 constitute a Protein kinase domain; it reads FRLVRRLGRG…QVALAEHVRV (270 aa). Residues 65–73 and Lys88 each bind ATP; that span reads LGRGGMGAV. Asp180 acts as the Proton acceptor in catalysis. In terms of domain architecture, PilZ spans 393 to 491; the sequence is LVEVPVQVVL…LKAAVDALLQ (99 aa). Residues 630–663 form a TPR repeat; sequence ARSHFQSGGALERDGQLSQALDQYERGLKLAPLE.

The protein belongs to the protein kinase superfamily. Ser/Thr protein kinase family. In terms of processing, autophosphorylated.

It carries out the reaction L-seryl-[protein] + ATP = O-phospho-L-seryl-[protein] + ADP + H(+). The catalysed reaction is L-threonyl-[protein] + ATP = O-phospho-L-threonyl-[protein] + ADP + H(+). May be regulated by calcium or a calmodulin-like protein. Plays an essential role in proper timing of early development events. The sequence is that of Serine/threonine-protein kinase Pkn1 (pkn1) from Myxococcus xanthus.